A 487-amino-acid chain; its full sequence is N-succinylglutamate 5-semialdehyde dehydrogenase (487 aa).

Residue 221–226 (GSSRTG) participates in NAD(+) binding. Active-site residues include Glu244 and Cys278.

This sequence belongs to the aldehyde dehydrogenase family. AstD subfamily.

The enzyme catalyses N-succinyl-L-glutamate 5-semialdehyde + NAD(+) + H2O = N-succinyl-L-glutamate + NADH + 2 H(+). It functions in the pathway amino-acid degradation; L-arginine degradation via AST pathway; L-glutamate and succinate from L-arginine: step 4/5. Catalyzes the NAD-dependent reduction of succinylglutamate semialdehyde into succinylglutamate. This Pseudomonas entomophila (strain L48) protein is N-succinylglutamate 5-semialdehyde dehydrogenase.